Reading from the N-terminus, the 115-residue chain is uncharacterized protein (115 aa).

Belongs to the transposase 34 family.

This is an uncharacterized protein from Sinorhizobium fredii (strain NBRC 101917 / NGR234).